Consider the following 445-residue polypeptide: Methionine aminopeptidase 2 (445 aa).

Residues 1 to 89 (MAAQAPVDEI…DPPRVLISQL (89 aa)) form a disordered region. The span at 60–74 (AKKKKKRKPKKKKKN) shows a compositional bias: basic residues. His-198 serves as a coordination point for substrate. Positions 218, 229, and 298 each coordinate a divalent metal cation. Residue His-306 participates in substrate binding. Glu-331 and Glu-426 together coordinate a divalent metal cation.

Belongs to the peptidase M24A family. Methionine aminopeptidase eukaryotic type 2 subfamily. The cofactor is Co(2+). Requires Zn(2+) as cofactor. Mn(2+) is required as a cofactor. It depends on Fe(2+) as a cofactor.

The protein localises to the cytoplasm. The catalysed reaction is Release of N-terminal amino acids, preferentially methionine, from peptides and arylamides.. Cotranslationally removes the N-terminal methionine from nascent proteins. The N-terminal methionine is often cleaved when the second residue in the primary sequence is small and uncharged (Met-Ala-, Cys, Gly, Pro, Ser, Thr, or Val). This Podospora anserina (strain S / ATCC MYA-4624 / DSM 980 / FGSC 10383) (Pleurage anserina) protein is Methionine aminopeptidase 2.